The following is a 563-amino-acid chain: Protein NOXP20 (563 aa).

Positions 1–84 (MSDDAGDTLA…ANALEPPLNG (84 aa)) are disordered. Positions 56 to 68 (AAVQGAGAAAIGP) are enriched in low complexity. Phosphoserine is present on Ser-120. The segment at 165-206 (VNSGSSEGAQPNTENGVPEITDAATDQGPAESPPTSPSSASR) is disordered. Over residues 166-179 (NSGSSEGAQPNTEN) the composition is skewed to polar residues. Thr-185 and Thr-189 each carry phosphothreonine. Position 196 is a phosphoserine (Ser-196). Thr-199 carries the phosphothreonine modification. Phosphoserine is present on residues Ser-202 and Ser-261. Positions 343-367 (AAKELENEENQEEQGLEEKGEEFAR) form a coiled coil. The tract at residues 411-436 (SEEETKKEEKEEKSQDPQEDKKEEKK) is disordered.

It belongs to the FAM114 family.

It localises to the cytoplasm. Functionally, may play a role in neuronal cell development. This chain is Protein NOXP20 (FAM114A1), found in Homo sapiens (Human).